The sequence spans 710 residues: Polyribonucleotide nucleotidyltransferase (710 aa).

Mg(2+)-binding residues include Asp501 and Asp507. Positions 568 to 628 constitute a KH domain; that stretch reads PKVQMFQIKP…ETVKQAILFI (61 aa). An S1 motif domain is found at 638–710; sequence NSIYHAHISR…RIDFVLISKK (73 aa).

Belongs to the polyribonucleotide nucleotidyltransferase family. The cofactor is Mg(2+).

The protein localises to the cytoplasm. The catalysed reaction is RNA(n+1) + phosphate = RNA(n) + a ribonucleoside 5'-diphosphate. Functionally, involved in mRNA degradation. Catalyzes the phosphorolysis of single-stranded polyribonucleotides processively in the 3'- to 5'-direction. This chain is Polyribonucleotide nucleotidyltransferase, found in Phytoplasma australiense.